The sequence spans 380 residues: ATP phosphoribosyltransferase regulatory subunit (380 aa).

It belongs to the class-II aminoacyl-tRNA synthetase family. HisZ subfamily. As to quaternary structure, heteromultimer composed of HisG and HisZ subunits.

It is found in the cytoplasm. It functions in the pathway amino-acid biosynthesis; L-histidine biosynthesis; L-histidine from 5-phospho-alpha-D-ribose 1-diphosphate: step 1/9. Functionally, required for the first step of histidine biosynthesis. May allow the feedback regulation of ATP phosphoribosyltransferase activity by histidine. In Thermoanaerobacter pseudethanolicus (strain ATCC 33223 / 39E) (Clostridium thermohydrosulfuricum), this protein is ATP phosphoribosyltransferase regulatory subunit.